Here is a 175-residue protein sequence, read N- to C-terminus: Ribosome maturation factor RimM (175 aa).

In terms of domain architecture, PRC barrel spans 99–171 (AGEYYWFQLK…RILFDLPDGL (73 aa)).

The protein belongs to the RimM family. As to quaternary structure, binds ribosomal protein uS19.

It localises to the cytoplasm. Functionally, an accessory protein needed during the final step in the assembly of 30S ribosomal subunit, possibly for assembly of the head region. Essential for efficient processing of 16S rRNA. May be needed both before and after RbfA during the maturation of 16S rRNA. It has affinity for free ribosomal 30S subunits but not for 70S ribosomes. The polypeptide is Ribosome maturation factor RimM (Syntrophotalea carbinolica (strain DSM 2380 / NBRC 103641 / GraBd1) (Pelobacter carbinolicus)).